Reading from the N-terminus, the 660-residue chain is Anoctamin-10 (660 aa).

Over 1 to 207 (MKVTLSALDT…DSIRGYFGET (207 aa)) the chain is Cytoplasmic. A helical membrane pass occupies residues 208-228 (IALYFGFLEYFTFALIPMAVI). At 229-240 (GLPYYLFVWEDY) the chain is on the extracellular side. A helical membrane pass occupies residues 241-261 (DKYVIFASFNLIWSTVILELW). The Cytoplasmic portion of the chain corresponds to 262–316 (KRGCANMTYRWGTLLMKRKFEEPRPGFHGVLGINSITGKEEPLYPSYKRQLRIYL). Residues 317–337 (VSLPFVCLCLYFSLYVMMIYF) traverse the membrane as a helical segment. At 338–352 (DMEVWALGLHENSGS) the chain is on the extracellular side. A helical membrane pass occupies residues 353–373 (EWTSVLLYVPSIIYAIVIEIM). Over 374-400 (NRLYRYAAEFLTSWENHRLESAYQNHL) the chain is Cytoplasmic. Residues 401–421 (ILKVLVFNFLNCFASLFYIAF) form a helical membrane-spanning segment. The Extracellular portion of the chain corresponds to 422 to 500 (VLKDMKLLRQ…YLGTFDDYLE (79 aa)). The helical transmembrane segment at 501 to 521 (LFLQFGYVSLFSCVYPLAAAF) threads the bilayer. The Cytoplasmic portion of the chain corresponds to 522–553 (AVLNNFTEVNSDALKMCRVFKRPFSEPSANIG). A helical transmembrane segment spans residues 554–574 (VWQLAFETMSVISVVTNCALI). Residues 575–590 (GMSPQVNAVFPESKAD) are Extracellular-facing. Residues 591–611 (LILIVVAVEHALLALKFILAF) traverse the membrane as a helical segment. Over 612–660 (AIPDKPRHIQMKLARLEFESLEALKQQQMKLVTENLKEEPMESGKEKAT) the chain is Cytoplasmic.

The protein belongs to the anoctamin family. Highly expressed in the brain. Intermediate levels in the retina and heart and low levels in the placenta, liver, lung, duodenum, kidney, testis and spleen. In brain areas, highest expression in the frontal and occipital cortices and in the cerebellum. Lower expression in the fetal brain than in the adult brain.

Its subcellular location is the cell membrane. Functionally, does not exhibit calcium-activated chloride channel (CaCC) activity. Can inhibit the activity of ANO1. The chain is Anoctamin-10 (ANO10) from Homo sapiens (Human).